Consider the following 705-residue polypeptide: Kinesin-like protein KIF2A (705 aa).

Residues 65 to 185 are disordered; that stretch reads DLVPDEDIEP…QQELREKRAQ (121 aa). At serine 75 the chain carries Phosphoserine. Threonine 96 is subject to Phosphothreonine. The residue at position 99 (serine 99) is a Phosphoserine. An N6-acetyllysine modification is found at lysine 101. A compositionally biased stretch (polar residues) spans 122 to 139; that stretch reads LPEQSSSAQQNGSVSDIS. Residues serine 134 and serine 139 each carry the phosphoserine modification. The stretch at 153–186 forms a coiled coil; the sequence is RRKSNCVKEVEKLQEKREKRRLQQQELREKRAQD. Residues 158-185 show a composition bias toward basic and acidic residues; the sequence is CVKEVEKLQEKREKRRLQQQELREKRAQ. In terms of domain architecture, Kinesin motor spans 222–552; it reads RICVCVRKRP…LRYANRVKEL (331 aa). 312–319 provides a ligand contact to ATP; the sequence is GQTGSGKT. Phosphoserine is present on glutamine 572. The stretch at 659-698 forms a coiled coil; that stretch reads ATQLEAILEQKIDILTELRDKVKSFRAALQEEEQASKQIN.

The protein belongs to the TRAFAC class myosin-kinesin ATPase superfamily. Kinesin family. MCAK/KIF2 subfamily. Interacts with AURKA and PLK1. Interacts with PSRC1. Interacts with MCRS1; the interaction enhances recruitment of KIF2A to the minus ends of spindle microtubules which promotes chromosome alignment.

Its subcellular location is the cytoplasm. It is found in the cytoskeleton. The protein localises to the microtubule organizing center. It localises to the centrosome. The protein resides in the spindle pole. Its subcellular location is the spindle. In terms of biological role, plus end-directed microtubule-dependent motor required for normal brain development. May regulate microtubule dynamics during axonal growth. Required for normal progression through mitosis. Required for normal congress of chromosomes at the metaphase plate. Required for normal spindle dynamics during mitosis. Promotes spindle turnover. Implicated in formation of bipolar mitotic spindles. Has microtubule depolymerization activity. This is Kinesin-like protein KIF2A from Rattus norvegicus (Rat).